The chain runs to 380 residues: Ribosomal RNA large subunit methyltransferase F (380 aa).

Residues 1–32 (MSHKTKPSTQERKAGKPSAPKRKVISKSPNSK) form a disordered region.

It belongs to the methyltransferase superfamily. METTL16/RlmF family.

The protein resides in the cytoplasm. It catalyses the reaction adenosine(1618) in 23S rRNA + S-adenosyl-L-methionine = N(6)-methyladenosine(1618) in 23S rRNA + S-adenosyl-L-homocysteine + H(+). Functionally, specifically methylates the adenine in position 1618 of 23S rRNA. This chain is Ribosomal RNA large subunit methyltransferase F, found in Shewanella halifaxensis (strain HAW-EB4).